The following is an 831-amino-acid chain: DNA ligase (831 aa).

NAD(+) contacts are provided by residues 34 to 38 (DADYD), 83 to 84 (SL), and glutamate 114. Residue lysine 116 is the N6-AMP-lysine intermediate of the active site. The NAD(+) site is built by arginine 137, glutamate 174, lysine 291, and lysine 315. Positions 409, 412, 427, and 433 each coordinate Zn(2+). A BRCT domain is found at 749–831 (AHTAPLNGQS…LAFLEQYSAQ (83 aa)).

The protein belongs to the NAD-dependent DNA ligase family. LigA subfamily. The cofactor is Mg(2+). Mn(2+) is required as a cofactor.

It carries out the reaction NAD(+) + (deoxyribonucleotide)n-3'-hydroxyl + 5'-phospho-(deoxyribonucleotide)m = (deoxyribonucleotide)n+m + AMP + beta-nicotinamide D-nucleotide.. In terms of biological role, DNA ligase that catalyzes the formation of phosphodiester linkages between 5'-phosphoryl and 3'-hydroxyl groups in double-stranded DNA using NAD as a coenzyme and as the energy source for the reaction. It is essential for DNA replication and repair of damaged DNA. This Xylella fastidiosa (strain M23) protein is DNA ligase.